A 259-amino-acid chain; its full sequence is Phosphatidylserine decarboxylase proenzyme (259 aa).

S183 functions as the Schiff-base intermediate with substrate; via pyruvic acid in the catalytic mechanism. The residue at position 183 (S183) is a Pyruvic acid (Ser); by autocatalysis.

This sequence belongs to the phosphatidylserine decarboxylase family. PSD-A subfamily. Heterodimer of a large membrane-associated beta subunit and a small pyruvoyl-containing alpha subunit. Pyruvate is required as a cofactor. Is synthesized initially as an inactive proenzyme. Formation of the active enzyme involves a self-maturation process in which the active site pyruvoyl group is generated from an internal serine residue via an autocatalytic post-translational modification. Two non-identical subunits are generated from the proenzyme in this reaction, and the pyruvate is formed at the N-terminus of the alpha chain, which is derived from the carboxyl end of the proenzyme. The post-translation cleavage follows an unusual pathway, termed non-hydrolytic serinolysis, in which the side chain hydroxyl group of the serine supplies its oxygen atom to form the C-terminus of the beta chain, while the remainder of the serine residue undergoes an oxidative deamination to produce ammonia and the pyruvoyl prosthetic group on the alpha chain.

The protein localises to the cell membrane. It catalyses the reaction a 1,2-diacyl-sn-glycero-3-phospho-L-serine + H(+) = a 1,2-diacyl-sn-glycero-3-phosphoethanolamine + CO2. It participates in phospholipid metabolism; phosphatidylethanolamine biosynthesis; phosphatidylethanolamine from CDP-diacylglycerol: step 2/2. Catalyzes the formation of phosphatidylethanolamine (PtdEtn) from phosphatidylserine (PtdSer). The polypeptide is Phosphatidylserine decarboxylase proenzyme (Neisseria gonorrhoeae (strain NCCP11945)).